The sequence spans 331 residues: 6-phosphogluconolactonase (331 aa).

Lys-287 carries the N6-acetyllysine modification.

The protein belongs to the cycloisomerase 2 family.

The catalysed reaction is 6-phospho-D-glucono-1,5-lactone + H2O = 6-phospho-D-gluconate + H(+). It participates in carbohydrate degradation; pentose phosphate pathway; D-ribulose 5-phosphate from D-glucose 6-phosphate (oxidative stage): step 2/3. Functionally, catalyzes the hydrolysis of 6-phosphogluconolactone to 6-phosphogluconate. This chain is 6-phosphogluconolactonase, found in Escherichia coli O157:H7.